The following is a 218-amino-acid chain: MFDIGFSELLLVLVIGLVVLGPERLPVAVRTVAGWIRTLRSLAATVQNELAQELKIQELQDSLKKAEEAGLQNLTPELKASMDELKEAAEALKRSYHSDIGLEAPHTIHNPLVTEPEAIHDGVTPAESATKAQASPQAPATDVDKTVTPTAVETASNNNEKPIVQVETFSASISSVDREPVPVTNTPVTKVQTATVDTHSTDSHGADQPRTHQPGGDR.

A helical transmembrane segment spans residues 1–21 (MFDIGFSELLLVLVIGLVVLG). 2 disordered regions span residues 126 to 145 (AESA…DVDK) and 174 to 218 (SSVD…GGDR). Positions 199–218 (HSTDSHGADQPRTHQPGGDR) are enriched in basic and acidic residues.

Belongs to the TatB family. As to quaternary structure, the Tat system comprises two distinct complexes: a TatABC complex, containing multiple copies of TatA, TatB and TatC subunits, and a separate TatA complex, containing only TatA subunits. Substrates initially bind to the TatABC complex, which probably triggers association of the separate TatA complex to form the active translocon.

The protein resides in the cell inner membrane. Part of the twin-arginine translocation (Tat) system that transports large folded proteins containing a characteristic twin-arginine motif in their signal peptide across membranes. Together with TatC, TatB is part of a receptor directly interacting with Tat signal peptides. TatB may form an oligomeric binding site that transiently accommodates folded Tat precursor proteins before their translocation. The protein is Sec-independent protein translocase protein TatB of Yersinia enterocolitica serotype O:8 / biotype 1B (strain NCTC 13174 / 8081).